The following is a 382-amino-acid chain: uncharacterized protein (382 aa).

Helical transmembrane passes span 14-34, 45-65, 75-95, 102-122, 131-151, 157-177, 204-224, 231-251, 270-290, 291-311, 325-345, and 349-369; these read GLLL…LWLA, MVSS…GYLI, YLAS…VGFW, FIAG…LMCS, LLAA…LLVS, LLHV…PLLF, LGVN…GLMP, GMAN…GILG, VQVF…AMAP, ALFI…AWAC, ALLL…AMLM, and SDNL…LMLL.

This sequence belongs to the major facilitator superfamily. YcaD (TC 2.A.1.26) family.

The protein localises to the cell inner membrane. This is an uncharacterized protein from Salmonella paratyphi A (strain ATCC 9150 / SARB42).